The chain runs to 476 residues: uncharacterized protein (476 aa).

The signal sequence occupies residues 1–24; that stretch reads MIRKSATGVIVALAVIWGGGTWYT.

This sequence to E.coli YdgA and H.influenzae HI_1236.

This is an uncharacterized protein from Escherichia coli (strain K12).